A 307-amino-acid chain; its full sequence is Coproporphyrin III ferrochelatase (307 aa).

Fe-coproporphyrin III is bound by residues Tyr12, Arg29, 45–46 (RY), Ser53, and Tyr124. His181 and Glu263 together coordinate Fe(2+).

The protein belongs to the ferrochelatase family.

The protein resides in the cytoplasm. The catalysed reaction is Fe-coproporphyrin III + 2 H(+) = coproporphyrin III + Fe(2+). Its pathway is porphyrin-containing compound metabolism; protoheme biosynthesis. In terms of biological role, involved in coproporphyrin-dependent heme b biosynthesis. Catalyzes the insertion of ferrous iron into coproporphyrin III to form Fe-coproporphyrin III. This is Coproporphyrin III ferrochelatase from Staphylococcus epidermidis (strain ATCC 35984 / DSM 28319 / BCRC 17069 / CCUG 31568 / BM 3577 / RP62A).